The following is an 87-amino-acid chain: Small ribosomal subunit protein bS18 (87 aa).

Basic residues predominate over residues 1 to 19 (MSTRSRARKRSRVRSRTRR). The interval 1 to 25 (MSTRSRARKRSRVRSRTRRKDPIFV) is disordered.

It belongs to the bacterial ribosomal protein bS18 family. In terms of assembly, part of the 30S ribosomal subunit. Forms a tight heterodimer with protein bS6.

Its function is as follows. Binds as a heterodimer with protein bS6 to the central domain of the 16S rRNA, where it helps stabilize the platform of the 30S subunit. The protein is Small ribosomal subunit protein bS18 of Rhodopirellula baltica (strain DSM 10527 / NCIMB 13988 / SH1).